The sequence spans 335 residues: Ketol-acid reductoisomerase (NADP(+)) (335 aa).

Residues Val2–Thr182 enclose the KARI N-terminal Rossmann domain. NADP(+) contacts are provided by residues Tyr25–Gln28, Arg48, Ser51, and Asp83–Gln86. His108 is an active-site residue. Gly134 lines the NADP(+) pocket. In terms of domain architecture, KARI C-terminal knotted spans Thr183–Leu328. The Mg(2+) site is built by Asp191, Glu195, Glu227, and Glu231. Residue Ser252 participates in substrate binding.

Belongs to the ketol-acid reductoisomerase family. The cofactor is Mg(2+).

It carries out the reaction (2R)-2,3-dihydroxy-3-methylbutanoate + NADP(+) = (2S)-2-acetolactate + NADPH + H(+). It catalyses the reaction (2R,3R)-2,3-dihydroxy-3-methylpentanoate + NADP(+) = (S)-2-ethyl-2-hydroxy-3-oxobutanoate + NADPH + H(+). It participates in amino-acid biosynthesis; L-isoleucine biosynthesis; L-isoleucine from 2-oxobutanoate: step 2/4. Its pathway is amino-acid biosynthesis; L-valine biosynthesis; L-valine from pyruvate: step 2/4. In terms of biological role, involved in the biosynthesis of branched-chain amino acids (BCAA). Catalyzes an alkyl-migration followed by a ketol-acid reduction of (S)-2-acetolactate (S2AL) to yield (R)-2,3-dihydroxy-isovalerate. In the isomerase reaction, S2AL is rearranged via a Mg-dependent methyl migration to produce 3-hydroxy-3-methyl-2-ketobutyrate (HMKB). In the reductase reaction, this 2-ketoacid undergoes a metal-dependent reduction by NADPH to yield (R)-2,3-dihydroxy-isovalerate. This Methanococcoides burtonii (strain DSM 6242 / NBRC 107633 / OCM 468 / ACE-M) protein is Ketol-acid reductoisomerase (NADP(+)).